The primary structure comprises 138 residues: Small ribosomal subunit protein uS11c (138 aa).

Residues 1 to 25 are disordered; it reads MAKSIPRTGSRRNVRSGSRKSTRRI. Positions 9-25 are enriched in basic residues; it reads GSRRNVRSGSRKSTRRI.

It belongs to the universal ribosomal protein uS11 family. As to quaternary structure, part of the 30S ribosomal subunit.

It is found in the plastid. It localises to the chloroplast. This Eucalyptus globulus subsp. globulus (Tasmanian blue gum) protein is Small ribosomal subunit protein uS11c.